We begin with the raw amino-acid sequence, 254 residues long: 3-oxo-5-alpha-steroid 4-dehydrogenase 2 (254 aa).

4 helical membrane passes run 8–28 (VPVL…LCLG), 72–92 (PRSL…AHYF), 146–166 (FSFG…SDYT), and 206–226 (LATW…FLGM).

It belongs to the steroid 5-alpha reductase family. In terms of tissue distribution, expressed in high levels in the prostate and many other androgen-sensitive tissues.

The protein localises to the microsome membrane. The protein resides in the endoplasmic reticulum membrane. It catalyses the reaction a 3-oxo-5alpha-steroid + NADP(+) = a 3-oxo-Delta(4)-steroid + NADPH + H(+). The enzyme catalyses 17beta-hydroxy-5alpha-androstan-3-one + NADP(+) = testosterone + NADPH + H(+). It carries out the reaction 5alpha-pregnane-3,20-dione + NADP(+) = progesterone + NADPH + H(+). Functionally, converts testosterone (T) into 5-alpha-dihydrotestosterone (DHT) and progesterone or corticosterone into their corresponding 5-alpha-3-oxosteroids. It plays a central role in sexual differentiation and androgen physiology. The sequence is that of 3-oxo-5-alpha-steroid 4-dehydrogenase 2 (Srd5a2) from Rattus norvegicus (Rat).